Here is a 568-residue protein sequence, read N- to C-terminus: Proline--tRNA ligase (568 aa).

Belongs to the class-II aminoacyl-tRNA synthetase family. ProS type 1 subfamily. As to quaternary structure, homodimer.

It localises to the cytoplasm. The catalysed reaction is tRNA(Pro) + L-proline + ATP = L-prolyl-tRNA(Pro) + AMP + diphosphate. Its function is as follows. Catalyzes the attachment of proline to tRNA(Pro) in a two-step reaction: proline is first activated by ATP to form Pro-AMP and then transferred to the acceptor end of tRNA(Pro). As ProRS can inadvertently accommodate and process non-cognate amino acids such as alanine and cysteine, to avoid such errors it has two additional distinct editing activities against alanine. One activity is designated as 'pretransfer' editing and involves the tRNA(Pro)-independent hydrolysis of activated Ala-AMP. The other activity is designated 'posttransfer' editing and involves deacylation of mischarged Ala-tRNA(Pro). The misacylated Cys-tRNA(Pro) is not edited by ProRS. In Chlamydia pneumoniae (Chlamydophila pneumoniae), this protein is Proline--tRNA ligase.